The primary structure comprises 285 residues: tRNA pseudouridine synthase A (285 aa).

Asp-69 functions as the Nucleophile in the catalytic mechanism. Tyr-127 is a binding site for substrate.

This sequence belongs to the tRNA pseudouridine synthase TruA family. In terms of assembly, homodimer.

The enzyme catalyses uridine(38/39/40) in tRNA = pseudouridine(38/39/40) in tRNA. Functionally, formation of pseudouridine at positions 38, 39 and 40 in the anticodon stem and loop of transfer RNAs. The chain is tRNA pseudouridine synthase A from Pseudomonas aeruginosa (strain ATCC 15692 / DSM 22644 / CIP 104116 / JCM 14847 / LMG 12228 / 1C / PRS 101 / PAO1).